The chain runs to 505 residues: Gap junction alpha-10 protein (505 aa).

Residues 1–16 are Cytoplasmic-facing; sequence MGDWNLLGGILEEVHS. Residues 17–37 form a helical membrane-spanning segment; the sequence is HSTIVGKIWLTILFIFRMLVL. At 38–76 the chain is on the extracellular side; the sequence is GVAAEDVWDDEQSAFACNTQQPGCNNICYDDAFPISLIR. Residues 77-97 form a helical membrane-spanning segment; sequence FWVLQIIFVSSPSLVYMGHAL. Topologically, residues 98-165 are cytoplasmic; sequence YRLRDFEKQR…TYVLHILTRS (68 aa). Residues 166-186 traverse the membrane as a helical segment; the sequence is VLEVGFMIGQYILYGFQMHPI. The Extracellular segment spans residues 187–209; that stretch reads YKCTQAPCPNSVDCFVSRPTEKT. A helical membrane pass occupies residues 210–230; that stretch reads IFMLFMHSIAAISLLLNILEI. The Cytoplasmic segment spans residues 231 to 505; that stretch reads FHLGIRKIMR…IIHETYVYVY (275 aa). The span at 371 to 383 shows a compositional bias: polar residues; that stretch reads TMTASQHRPSSAL. The disordered stretch occupies residues 371–491; that stretch reads TMTASQHRPS…SKSSHVDSPP (121 aa). The span at 437 to 446 shows a compositional bias: basic and acidic residues; the sequence is MSEKGQRHSD. Low complexity predominate over residues 447 to 460; that stretch reads SGSSRSLNSSCLDF.

It belongs to the connexin family. Alpha-type (group II) subfamily. As to quaternary structure, a connexon is composed of a hexamer of connexins. In terms of tissue distribution, low levels were detected in skin, heart, kidney, testis, ovary, intestine. Expression not detected in brain, sciatic nerve or liver. According to PubMed:15147297 expression is detected only in horizontal cells in the inner nuclear layer of the retina and not in other neurons of the central nervous system or tissues. Detected in the outer plexiform layer of the retina (at protein level).

The protein localises to the cell membrane. The protein resides in the cell junction. It localises to the gap junction. In terms of biological role, one gap junction consists of a cluster of closely packed pairs of transmembrane channels, the connexons, through which materials of low MW diffuse from one cell to a neighboring cell. Involved in tracer coupling between horizontal cells of the retina. May play a role in the regulation of horizontal cell patterning. The sequence is that of Gap junction alpha-10 protein (Gja10) from Mus musculus (Mouse).